The following is a 174-amino-acid chain: Actin-related protein 2/3 complex subunit 3 (174 aa).

This sequence belongs to the ARPC3 family. Component of the Arp2/3 complex composed of arpB/Arp2, arpC/Arp3, arcA/p41-arc, arcB/p34-arc, arcC/p21-arc, arcD/p20-arc and arcE/p16-arc. Interacts with carmil (via the region between the LRR domain and COOH-terminal proline-rich domain); carmil is required for Arp2/3-dependent actin nucleation. Arp2/3 complex, MyoB, MyoC, and the alpha and beta subunits of capping protein all form a larger complex with carmil.

The protein localises to the cytoplasm. It is found in the cytoskeleton. The protein resides in the cytosol. Its subcellular location is the cell cortex. It localises to the cell projection. The protein localises to the pseudopodium. Functions as a component of the Arp2/3 complex which is involved in regulation of actin polymerization and together with an activating nucleation-promoting factor (NPF) mediates the formation of branched actin networks. Seems to contact the pointed end of the daughter actin filament. The Arp2/3 complex is involved in organizing the actin system in cell motility and chemotaxis, in phagocytosis and macropinocytosis, at late steps of endosome processing, and in mitosis. In concert with a group of other proteins, the Arp2/3 complex plays a general role in the rapid activation and adaptation of the actin system to its multiple functions. This Dictyostelium discoideum (Social amoeba) protein is Actin-related protein 2/3 complex subunit 3 (arcC).